Consider the following 233-residue polypeptide: MADS-box protein CMB1 (233 aa).

The MADS-box domain maps to 3–58 (RGRVELKRIENKINRQVTFAKRRNGLLKKAYELSVLCDAEVALIVFSNRGKLYEFC). The 91-residue stretch at 87 to 177 (TESSYQEYLK…KTKLEESCAS (91 aa)) folds into the K-box domain.

Its subcellular location is the nucleus. The polypeptide is MADS-box protein CMB1 (CMB1) (Dianthus caryophyllus (Carnation)).